A 1464-amino-acid polypeptide reads, in one-letter code: Bridge-like lipid transfer protein family member 3B (1464 aa).

The 92-residue stretch at 3-94 (GIIKKQILKH…DKVIMEMSTC (92 aa)) folds into the Chorein N-terminal domain. Disordered stretches follow at residues 267–297 (STEQRKSMAPEPTQSSTVVASAQQVKTTQTS) and 409–436 (DHNVGSPPKSPTHASPQHTQTEKDYPLK). Residues 278 to 297 (PTQSSTVVASAQQVKTTQTS) show a composition bias toward polar residues. Ser414, Ser418, Ser774, Ser935, and Ser1009 each carry phosphoserine. Disordered stretches follow at residues 1066–1089 (SKEETPPVRTLKSQSSLSGKPKER), 1164–1183 (LQNYGETSPDAISTNSEGAQ), and 1392–1413 (QRSVTQATQTSPGVPWPSQSAN). 2 stretches are compositionally biased toward polar residues: residues 1164 to 1182 (LQNYGETSPDAISTNSEGA) and 1394 to 1413 (SVTQATQTSPGVPWPSQSAN). Positions 1418–1456 (SFDFTREQLMEENESLKQELAKAKMALAEAHLEKDALLH) form a coiled coil.

In terms of assembly, monomer. Homodimer (via N-terminus). Associates with the Golgi-associated retrograde protein (GARP) complex. Interacts with GARP complex component VPS52. Interacts (via C-terminal coiled-coil domain) with STX6.

Its subcellular location is the cytoplasm. It is found in the cytosol. It localises to the early endosome. Tube-forming lipid transport protein which mediates the transfer of lipids between membranes at organelle contact sites. Required for retrograde traffic of vesicle clusters in the early endocytic pathway to the Golgi complex. The polypeptide is Bridge-like lipid transfer protein family member 3B (Homo sapiens (Human)).